A 344-amino-acid polypeptide reads, in one-letter code: GTP 3',8-cyclase (344 aa).

In terms of domain architecture, Radical SAM core spans 19 to 245; the sequence is PFGRAVTYLR…DIPYRTGGPA (227 aa). Arg-28 serves as a coordination point for GTP. Residues Cys-35 and Cys-39 each coordinate [4Fe-4S] cluster. Residue Tyr-41 participates in S-adenosyl-L-methionine binding. [4Fe-4S] cluster is bound at residue Cys-42. Residue Arg-77 participates in GTP binding. Gly-81 is a binding site for S-adenosyl-L-methionine. Thr-111 provides a ligand contact to GTP. An S-adenosyl-L-methionine-binding site is contributed by Ser-135. Lys-171 provides a ligand contact to GTP. Met-205 is a binding site for S-adenosyl-L-methionine. The [4Fe-4S] cluster site is built by Cys-268 and Cys-271. 273 to 275 is a binding site for GTP; that stretch reads RVR. Cys-285 contributes to the [4Fe-4S] cluster binding site.

The protein belongs to the radical SAM superfamily. MoaA family. Monomer and homodimer. It depends on [4Fe-4S] cluster as a cofactor.

The enzyme catalyses GTP + AH2 + S-adenosyl-L-methionine = (8S)-3',8-cyclo-7,8-dihydroguanosine 5'-triphosphate + 5'-deoxyadenosine + L-methionine + A + H(+). Its pathway is cofactor biosynthesis; molybdopterin biosynthesis. Functionally, catalyzes the cyclization of GTP to (8S)-3',8-cyclo-7,8-dihydroguanosine 5'-triphosphate. The polypeptide is GTP 3',8-cyclase (Brucella melitensis biotype 2 (strain ATCC 23457)).